The following is a 326-amino-acid chain: Regulation of nuclear pre-mRNA domain-containing protein 1B (326 aa).

Ser-2 is subject to N-acetylserine. Residues 2–133 enclose the CID domain; that stretch reads SSFSESALEK…QLKLSMEDSK (132 aa). A disordered region spans residues 127–149; sequence LSMEDSKSPPPKATEEKKSLKRT. Residues 128–144 show a composition bias toward basic and acidic residues; sequence SMEDSKSPPPKATEEKK. Phosphoserine occurs at positions 132 and 134. The residue at position 161 (Tyr-161) is a Phosphotyrosine. Phosphoserine is present on residues Ser-166 and Ser-299.

The protein belongs to the UPF0400 (RTT103) family. In terms of assembly, homodimer. May form a heterodimer with RPRD1A. Associates with RPAP2. Associates with the RNA polymerase II complex. In terms of tissue distribution, preferentially expressed in a range of tumor tissues including colon, lung, liver, breast, prostate, stomach, uterine endometrium and cervical cancers with higher levels in tumors than in adjacent non-tumor tissue (at protein level).

The protein resides in the nucleus. Functionally, interacts with phosphorylated C-terminal heptapeptide repeat domain (CTD) of the largest RNA polymerase II subunit POLR2A, and participates in dephosphorylation of the CTD by RPAP2. Transcriptional regulator which enhances expression of CCND1. Promotes binding of RNA polymerase II to the CCDN1 promoter and to the termination region before the poly-A site but decreases its binding after the poly-A site. Prevents RNA polymerase II from reading through the 3' end termination site and may allow it to be recruited back to the promoter through promotion of the formation of a chromatin loop. Also enhances the transcription of a number of other cell cycle-related genes including CDK2, CDK4, CDK6 and cyclin-E but not CDKN1A, CDKN1B or cyclin-A. Promotes cell proliferation. This is Regulation of nuclear pre-mRNA domain-containing protein 1B (RPRD1B) from Homo sapiens (Human).